The following is a 1350-amino-acid chain: Zinc finger protein Xfin (1350 aa).

The KRAB domain maps to Met1–Glu58. Residues Ser47–Asp68 form a disordered region. C2H2-type zinc fingers lie at residues His108–His130, His136–His158, Tyr164–His186, Tyr192–His214, Tyr220–His242, Tyr248–His270, Phe276–His298, Tyr326–His348, Tyr354–His376, Tyr382–His404, Phe410–His432, Tyr438–His460, Tyr466–His488, His503–His525, Phe531–His553, Phe559–His581, Phe587–His609, His615–His637, Tyr643–His665, Tyr671–His693, Tyr699–His721, Tyr750–His772, Tyr778–His800, Tyr806–His828, Tyr834–His856, Tyr862–His884, Tyr890–His912, Tyr918–His940, Phe988–His1010, Tyr1016–His1038, Tyr1044–His1066, Tyr1136–His1158, Tyr1164–His1186, Tyr1192–His1214, Tyr1220–His1242, Tyr1248–His1270, and Tyr1276–Cys1298.

This sequence belongs to the krueppel C2H2-type zinc-finger protein family. Post-translationally, phosphorylated. Phosphorylation enhances RNA binding. As to expression, expressed in oocytes, and in specialized cell types such as neural retina cones in adults.

It is found in the cytoplasm. In terms of biological role, binds to poly-G sequences in RNA. May function in post-translational regulation processes. The sequence is that of Zinc finger protein Xfin from Xenopus laevis (African clawed frog).